The sequence spans 1091 residues: ATP-dependent helicase/deoxyribonuclease subunit B (1091 aa).

It belongs to the helicase family. AddB/RexB type 2 subfamily. In terms of assembly, heterodimer of AddA and RexB. Requires Mg(2+) as cofactor.

Functionally, the heterodimer acts as both an ATP-dependent DNA helicase and an ATP-dependent, dual-direction single-stranded exonuclease. Recognizes the chi site generating a DNA molecule suitable for the initiation of homologous recombination. This subunit has 5' -&gt; 3' nuclease activity but not helicase activity. This Streptococcus pneumoniae serotype 19F (strain G54) protein is ATP-dependent helicase/deoxyribonuclease subunit B.